The chain runs to 666 residues: Galactocerebrosidase (666 aa).

The first 22 residues, 1-22 (MIYKLYFAIALCFSLCFDLCIA), serve as a signal peptide directing secretion. Thr-91 contributes to the substrate binding site. N-linked (GlcNAc...) asparagine glycosylation is present at Asn-125. 2 residues coordinate substrate: Trp-133 and Asn-179. Glu-180 (proton donor/acceptor) is an active-site residue. Glu-256 (nucleophile) is an active-site residue. Cys-269 and Cys-376 are disulfide-bonded. Asn-361 carries an N-linked (GlcNAc...) asparagine glycan. Arg-378 provides a ligand contact to substrate. Residues Asn-385, Asn-390, Asn-500, and Asn-540 are each glycosylated (N-linked (GlcNAc...) asparagine).

Belongs to the glycosyl hydrolase 59 family.

The protein localises to the lysosome. It carries out the reaction a beta-D-galactosyl-(1&lt;-&gt;1')-N-acylsphing-4-enine + H2O = an N-acylsphing-4-enine + D-galactose. It catalyses the reaction beta-D-galactosyl-(1&lt;-&gt;1)-sphing-4-enine + H2O = sphing-4-enine + D-galactose. The enzyme catalyses a D-galactosylceramide + H2O = an N-acyl-sphingoid base + D-galactose. Hydrolyzes the galactose ester bonds of glycolipids such as galactosylceramide and galactosylsphingosine. The polypeptide is Galactocerebrosidase (Salmo salar (Atlantic salmon)).